Reading from the N-terminus, the 285-residue chain is Glutamate racemase (285 aa).

Substrate is bound by residues 30–31 (DS) and 62–63 (YG). Cysteine 94 acts as the Proton donor/acceptor in catalysis. Position 95 to 96 (95 to 96 (NT)) interacts with substrate. The Proton donor/acceptor role is filled by cysteine 206. 207–208 (TH) is a substrate binding site.

It belongs to the aspartate/glutamate racemases family.

It carries out the reaction L-glutamate = D-glutamate. It participates in cell wall biogenesis; peptidoglycan biosynthesis. In terms of biological role, provides the (R)-glutamate required for cell wall biosynthesis. In Pectobacterium atrosepticum (strain SCRI 1043 / ATCC BAA-672) (Erwinia carotovora subsp. atroseptica), this protein is Glutamate racemase.